Here is a 464-residue protein sequence, read N- to C-terminus: 2-oxoadipate dioxygenase/decarboxylase (464 aa).

Residues His-70, Arg-74, and His-226 each coordinate 2-oxoadipate. A Fe(2+)-binding site is contributed by His-70. 2 residues coordinate Fe(2+): His-226 and Glu-294. Val-402 provides a ligand contact to 2-oxoadipate.

It belongs to the 2-oxoadipate dioxygenase/decarboxylase family. It depends on Fe(2+) as a cofactor.

The enzyme catalyses 2-oxoadipate + O2 = (R)-2-hydroxyglutarate + CO2. It participates in amino-acid degradation. Its activity is regulated as follows. Inhibited by EDTA. In terms of biological role, catalyzes the decarboxylation and hydroxylation of 2-oxoadipate (2OA) to form D-2-hydroxyglutarate (D-2-HGA). Is specific for 2-oxoadipate. Is involved in a D-lysine catabolic pathway. The protein is 2-oxoadipate dioxygenase/decarboxylase of Pseudomonas putida (strain ATCC 47054 / DSM 6125 / CFBP 8728 / NCIMB 11950 / KT2440).